A 601-amino-acid polypeptide reads, in one-letter code: Glutathione-regulated potassium-efflux system protein KefB (601 aa).

13 helical membrane-spanning segments follow: residues 4–24, 29–49, 55–75, 87–107, 115–135, 152–172, 177–197, 207–227, 230–250, 268–288, 291–311, 324–344, and 356–376; these read SDFL…VPLA, IGAV…GLGF, EILH…GLEL, IFGV…GLLM, AAVV…LQLM, VLLF…LLAG, HFDW…LIGG, FIAA…LVLG, LFMD…GVLL, GLLL…GVLY, LLWV…VLYL, MQFA…FSSA, and ALLL…MKLV. An RCK N-terminal domain is found at 400–519; sequence KPQVIVVGFG…AGVTQFSRET (120 aa).

It belongs to the monovalent cation:proton antiporter 2 (CPA2) transporter (TC 2.A.37) family. KefB subfamily. As to quaternary structure, interacts with the regulatory subunit KefG.

It localises to the cell inner membrane. Pore-forming subunit of a potassium efflux system that confers protection against electrophiles. Catalyzes K(+)/H(+) antiport. The protein is Glutathione-regulated potassium-efflux system protein KefB of Escherichia coli O127:H6 (strain E2348/69 / EPEC).